Here is an 87-residue protein sequence, read N- to C-terminus: Omega-lycotoxin-Am1b (87 aa).

The signal sequence occupies residues 1-17 (MKLSIFFVLFFIAIAYC). A propeptide spanning residues 18 to 40 (QPEFLDDEEDEVEETLPVAEEGR) is cleaved from the precursor. 4 disulfide bridges follow: cysteine 44–cysteine 59, cysteine 51–cysteine 64, cysteine 58–cysteine 84, and cysteine 66–cysteine 82.

The protein belongs to the neurotoxin omega-lctx family. In terms of tissue distribution, expressed by the venom gland.

It is found in the secreted. Its function is as follows. Modulates Cav2.1/CACNA1A voltage-gated calcium channels (P/Q-type currents) in rat cerebellar Purkinje cells and hippocampal CA1-CA3 neurons. At saturating concentrations (&gt;10 nM) decelerates activation kinetics and slightly increases peak amplitude without affecting deactivation kinetics. In vivo, does not cause death when intravenously injected into mice. In rat models, through its activity on Cav2.1/CACNA1A, has an ameliorative effect on memory defects provoked by hyperstimulation of N-methyl-D-aspartate receptors (NMDARs) in the hippocampus. The sequence is that of Omega-lycotoxin-Am1b from Alopecosa marikovskyi (Wolf spider).